Here is a 124-residue protein sequence, read N- to C-terminus: Small ribosomal subunit protein uS12 (124 aa).

Residue Asp-89 is modified to 3-methylthioaspartic acid.

The protein belongs to the universal ribosomal protein uS12 family. In terms of assembly, part of the 30S ribosomal subunit. Contacts proteins S8 and S17. May interact with IF1 in the 30S initiation complex.

With S4 and S5 plays an important role in translational accuracy. In terms of biological role, interacts with and stabilizes bases of the 16S rRNA that are involved in tRNA selection in the A site and with the mRNA backbone. Located at the interface of the 30S and 50S subunits, it traverses the body of the 30S subunit contacting proteins on the other side and probably holding the rRNA structure together. The combined cluster of proteins S8, S12 and S17 appears to hold together the shoulder and platform of the 30S subunit. The chain is Small ribosomal subunit protein uS12 from Yersinia pestis (strain Pestoides F).